A 112-amino-acid polypeptide reads, in one-letter code: Nitrogen regulatory protein P-II (112 aa).

Phosphoserine is present on S49. Position 51 is an O-UMP-tyrosine (Y51).

It belongs to the P(II) protein family. As to quaternary structure, homotrimer. In terms of processing, phosphorylation dependent on the nitrogen source and spectral light quality.

Its function is as follows. P-II indirectly controls the transcription of the GS gene (glnA). P-II prevents NR-II-catalyzed conversion of NR-I to NR-I-phosphate, the transcriptional activator of glnA. When P-II is phosphorylated, these events are reversed. In nitrogen-limiting conditions, when the ratio of Gln to 2-ketoglutarate decreases, P-II is phosphorylated which allows the deadenylation of glutamine synthetase (GS), thus activating the enzyme. This Microchaete diplosiphon (Fremyella diplosiphon) protein is Nitrogen regulatory protein P-II (glnB).